The primary structure comprises 195 residues: Segregation and condensation protein B (195 aa).

It belongs to the ScpB family. Homodimer. Homodimerization may be required to stabilize the binding of ScpA to the Smc head domains. Component of a cohesin-like complex composed of ScpA, ScpB and the Smc homodimer, in which ScpA and ScpB bind to the head domain of Smc. The presence of the three proteins is required for the association of the complex with DNA.

It localises to the cytoplasm. Its function is as follows. Participates in chromosomal partition during cell division. May act via the formation of a condensin-like complex containing Smc and ScpA that pull DNA away from mid-cell into both cell halves. The sequence is that of Segregation and condensation protein B from Clostridium perfringens (strain SM101 / Type A).